Consider the following 133-residue polypeptide: Holo-[acyl-carrier-protein] synthase (133 aa).

Mg(2+) is bound by residues aspartate 8 and glutamate 56.

Belongs to the P-Pant transferase superfamily. AcpS family. Requires Mg(2+) as cofactor.

Its subcellular location is the cytoplasm. The catalysed reaction is apo-[ACP] + CoA = holo-[ACP] + adenosine 3',5'-bisphosphate + H(+). In terms of biological role, transfers the 4'-phosphopantetheine moiety from coenzyme A to a Ser of acyl-carrier-protein. This chain is Holo-[acyl-carrier-protein] synthase, found in Deinococcus radiodurans (strain ATCC 13939 / DSM 20539 / JCM 16871 / CCUG 27074 / LMG 4051 / NBRC 15346 / NCIMB 9279 / VKM B-1422 / R1).